The primary structure comprises 112 residues: Large ribosomal subunit protein bL17 (112 aa).

Belongs to the bacterial ribosomal protein bL17 family. As to quaternary structure, part of the 50S ribosomal subunit. Contacts protein L32.

The protein is Large ribosomal subunit protein bL17 of Thermoanaerobacter pseudethanolicus (strain ATCC 33223 / 39E) (Clostridium thermohydrosulfuricum).